The chain runs to 358 residues: C-X-C chemokine receptor type 2 (358 aa).

Residues 1–46 (MQEFTWENYSYEDFFGDFSNYSYSTDLPPTLLDSAPCRSESLETNS) are Extracellular-facing. N-linked (GlcNAc...) asparagine glycans are attached at residues Asn8 and Asn20. A helical membrane pass occupies residues 47–73 (YVVLITYILVFLLSLLGNSLVMLVILY). Topologically, residues 74–82 (SRSTCSVTD) are cytoplasmic. A helical membrane pass occupies residues 83–103 (VYLLNLAIADLLFATTLPIWA). The Extracellular portion of the chain corresponds to 104 to 118 (ASKVHGWTFGTPLCK). Residues Cys117 and Cys194 are joined by a disulfide bond. A helical membrane pass occupies residues 119–140 (VVSLVKEVNFYSGILLLACISV). Residues 141–161 (DRYLAIVHATRTMIQKRHLVK) lie on the Cytoplasmic side of the membrane. A helical membrane pass occupies residues 162 to 181 (FICLSMWGVSLILSLPILLF). The Extracellular portion of the chain corresponds to 182–206 (RNAIFPPNSSPVCYEDMGNSTAKWR). The helical transmembrane segment at 207-229 (MVLRILPQTFGFILPLLVMLFCY) threads the bilayer. Residues 230-249 (VFTLRTLFQAHMGQKHRAMR) lie on the Cytoplasmic side of the membrane. The chain crosses the membrane as a helical span at residues 250 to 271 (VIFAVVLIFLLCWLPYNLVLLT). The Extracellular segment spans residues 272–292 (DTLMRTHVIQETCERRNDIDR). A helical transmembrane segment spans residues 293–313 (ALDATEILGFLHSCLNPIIYA). Residues 314–358 (FIGQKFRYGLLKILAAHGLISKEFLAKESRPSFVASSSGNTSTTL) lie on the Cytoplasmic side of the membrane.

This sequence belongs to the G-protein coupled receptor 1 family. Interacts with IL8. Interacts with GNAI2. Phosphorylated upon ligand binding; which is required for desensitization. Expressed preferentially in neutrophils.

The protein localises to the cell membrane. Functionally, receptor for interleukin-8 which is a powerful neutrophil chemotactic factor. Binding of IL-8 to the receptor causes activation of neutrophils. This response is mediated via a G-protein that activates a phosphatidylinositol-calcium second messenger system. Binds to IL-8 with high affinity. Also binds with high affinity to CXCL3, GRO/MGSA and NAP-2. In Oryctolagus cuniculus (Rabbit), this protein is C-X-C chemokine receptor type 2 (CXCR2).